An 886-amino-acid chain; its full sequence is Neurotrophin 1 (886 aa).

Residues 1–29 (MKAGRAFGCLFWALLYCVLYLDLVSGNSA) form the signal peptide. Residues 30-498 (DDELMDFDFA…FDDFSLSKKR (469 aa)) constitute a propeptide that is removed on maturation. N-linked (GlcNAc...) asparagine glycosylation is found at Asn-267 and Asn-317. The disordered stretch occupies residues 321–340 (FQQPSSQEEEKMASSNGGQS). An N-linked (GlcNAc...) asparagine glycan is attached at Asn-353. Residues 369 to 436 (RNSAEETEEP…HKPVVTPPNK (68 aa)) are disordered. Residues 508-597 (MCQSVVRYAR…KVPTCCSCQV (90 aa)) form the Spaetzle domain. Disulfide bonds link Cys-509–Cys-564, Cys-546–Cys-593, and Cys-553–Cys-595. The N-linked (GlcNAc...) asparagine glycan is linked to Asn-623. Disordered stretches follow at residues 675–754 (PGIS…QYHR) and 789–886 (VSAP…QSIQ). The segment covering 698-710 (YKSSSSSSKKYYS) has biased composition (low complexity). The span at 797-807 (PAPPLPMPPMP) shows a compositional bias: pro residues. 2 stretches are compositionally biased toward basic residues: residues 815–827 (HQAH…HHLH) and 874–886 (SRRH…QSIQ).

In terms of assembly, homodimer; disulfide-linked. Detected in the fan-shaped body which is a component of the locomotion center in the central nervous system (CNS) (at protein level). Expressed in the optic lobes and brain.

In terms of biological role, neurotrophin which may function as a ligand for the Toll-related receptors Toll-7 and Tollo. Binds to Toll-7 and probably acts as its ligand in promoting motor axon targeting and neuronal survival in the central nervous system (CNS). Involved in synaptic targeting of ISNb/d motorneurons and also some SNa motorneurons. In larvae, involved in the negative regulation of the tracheal immune response to bacterial infection perhaps by acting as a ligand for the Toll-related receptor Tollo. May be involved in the normal development of specific neurons at the neuromuscular junction. The polypeptide is Neurotrophin 1 (Drosophila melanogaster (Fruit fly)).